Reading from the N-terminus, the 542-residue chain is Chaperonin GroEL (542 aa).

ATP is bound by residues 29–32 (TLGP), Lys50, 86–90 (DGTTT), Gly414, and Asp494.

This sequence belongs to the chaperonin (HSP60) family. In terms of assembly, forms a cylinder of 14 subunits composed of two heptameric rings stacked back-to-back. Interacts with the co-chaperonin GroES.

It localises to the cytoplasm. The catalysed reaction is ATP + H2O + a folded polypeptide = ADP + phosphate + an unfolded polypeptide.. Together with its co-chaperonin GroES, plays an essential role in assisting protein folding. The GroEL-GroES system forms a nano-cage that allows encapsulation of the non-native substrate proteins and provides a physical environment optimized to promote and accelerate protein folding. The sequence is that of Chaperonin GroEL from Cytophaga hutchinsonii (strain ATCC 33406 / DSM 1761 / CIP 103989 / NBRC 15051 / NCIMB 9469 / D465).